An 814-amino-acid chain; its full sequence is MVEKQEEMNEFGAVNGGKVGTSSSVSPPQDKGRKNKRKLADPSPQNAASLTEFPRYELHSFKSQSPLCENDSNGQLKAEESDSVGWDDPFACHLEGLLSSNLLTLFRSAMNQIMDCGYSEDVVLKAISSSRFYCGGTDLVSNIVNDTLSFLKSGKKVAGSRDYVFEDLQQLVAYSLVEKISLVREVRPSLSTDEAMWRLLICDLNVLKAFEVDADGLEGSSVSNASKSSESPVAECNPPKSSDADNPKAPVSNTQSKQSEPVKFGNFANVNNSKNPHASGATPGKEVFSVSTASGEGTKSASLTSVSDEKLVSCRKGRTKKEMAMLRQKSCVEKIRTYSKGGGYKTAKFGGFLVEKRGKSASDLLSAQARNSSSKITTEVMKIPLAESSSTLSNSTKSDSPALDVKEHVTALPANNAPAPVASEKKSGSEPEEKPSVSTKPAPDYYAAIPYDATLGIYIPRNKRDELILKLVPRMKDLQKELQDWTDWANQKVKQATVRLLKDQPELKALRKEKEEAEEFRKEKQLLEENTIKRRSEMELALNNATNQLERTNNTIRRLELEQSLLKREREAANIRASESAESCREAKERVQRLLKNSQSWEGQKNLLQEELKSQRDKVAGLQQEVAKAKTRQNQIEATWKQEKSATGKLTAQAAALKKERGKLEELGKAEEERIKTKAENDVKYYIENIKRLDTEISKLKLKSDSLKIAALKKGIDGNNDGNKSGMNHTTNTKANSMASAKVWENNQGAESKIKRERECVMCLSEEMSVIFLPCAHQVLCSKCNQLHEKEAMEDCPSCRAKIQRRIQARFARG.

Disordered stretches follow at residues 1 to 51, 221 to 301, and 411 to 441; these read MVEK…ASLT, SVSN…TKSA, and ALPA…STKP. The span at 221 to 231 shows a compositional bias: low complexity; sequence SVSNASKSSES. Residues 289–301 are compositionally biased toward polar residues; sequence SVSTASGEGTKSA. Basic and acidic residues predominate over residues 423 to 435; sequence SEKKSGSEPEEKP. Residues 506–710 adopt a coiled-coil conformation; it reads ELKALRKEKE…KLKSDSLKIA (205 aa). An RING-type zinc finger spans residues 760–800; sequence CVMCLSEEMSVIFLPCAHQVLCSKCNQLHEKEAMEDCPSCR.

Belongs to the RING-type zinc finger family.

The enzyme catalyses S-ubiquitinyl-[E2 ubiquitin-conjugating enzyme]-L-cysteine + [acceptor protein]-L-lysine = [E2 ubiquitin-conjugating enzyme]-L-cysteine + N(6)-ubiquitinyl-[acceptor protein]-L-lysine.. The protein operates within protein modification; protein ubiquitination. In Arabidopsis thaliana (Mouse-ear cress), this protein is Putative E3 ubiquitin-protein ligase RF298 (RF298).